The chain runs to 98 residues: Flagellar hook-basal body complex protein FliE (98 aa).

Residues 1-23 show a composition bias toward low complexity; sequence MNNINDLRLNNNISNTNKSQNST. Residues 1–24 form a disordered region; sequence MNNINDLRLNNNISNTNKSQNSTG.

The protein belongs to the FliE family.

The protein resides in the bacterial flagellum basal body. The sequence is that of Flagellar hook-basal body complex protein FliE from Campylobacter jejuni subsp. jejuni serotype O:2 (strain ATCC 700819 / NCTC 11168).